Here is a 24-residue protein sequence, read N- to C-terminus: Caerulein precursor fragment B4 (24 aa).

In terms of tissue distribution, expressed by the skin glands.

It localises to the secreted. Functionally, has antibacterial and antifungal activity. The protein is Caerulein precursor fragment B4 of Xenopus borealis (Kenyan clawed frog).